A 444-amino-acid chain; its full sequence is Tol-Pal system protein TolB (444 aa).

The first 26 residues, 1-26 (MTLFRTLAPMGLALALLLPAAVPAAA), serve as a signal peptide directing secretion. A compositionally biased stretch (polar residues) spans 281 to 310 (IYTLDTGSGTRRQLTNSPSIETAPSYSPDG). The tract at residues 281-311 (IYTLDTGSGTRRQLTNSPSIETAPSYSPDGS) is disordered.

This sequence belongs to the TolB family. As to quaternary structure, the Tol-Pal system is composed of five core proteins: the inner membrane proteins TolA, TolQ and TolR, the periplasmic protein TolB and the outer membrane protein Pal. They form a network linking the inner and outer membranes and the peptidoglycan layer.

The protein resides in the periplasm. In terms of biological role, part of the Tol-Pal system, which plays a role in outer membrane invagination during cell division and is important for maintaining outer membrane integrity. The sequence is that of Tol-Pal system protein TolB from Cereibacter sphaeroides (strain ATCC 17029 / ATH 2.4.9) (Rhodobacter sphaeroides).